Consider the following 728-residue polypeptide: 1,4-alpha-glucan branching enzyme GlgB (728 aa).

D405 acts as the Nucleophile in catalysis. E458 functions as the Proton donor in the catalytic mechanism.

Belongs to the glycosyl hydrolase 13 family. GlgB subfamily. Monomer.

It carries out the reaction Transfers a segment of a (1-&gt;4)-alpha-D-glucan chain to a primary hydroxy group in a similar glucan chain.. It participates in glycan biosynthesis; glycogen biosynthesis. Catalyzes the formation of the alpha-1,6-glucosidic linkages in glycogen by scission of a 1,4-alpha-linked oligosaccharide from growing alpha-1,4-glucan chains and the subsequent attachment of the oligosaccharide to the alpha-1,6 position. The chain is 1,4-alpha-glucan branching enzyme GlgB from Shigella flexneri serotype 5b (strain 8401).